Consider the following 183-residue polypeptide: Peptide deformylase (183 aa).

Fe cation contacts are provided by cysteine 110 and histidine 153. Residue glutamate 154 is part of the active site. A Fe cation-binding site is contributed by histidine 157.

It belongs to the polypeptide deformylase family. The cofactor is Fe(2+).

It catalyses the reaction N-terminal N-formyl-L-methionyl-[peptide] + H2O = N-terminal L-methionyl-[peptide] + formate. In terms of biological role, removes the formyl group from the N-terminal Met of newly synthesized proteins. Requires at least a dipeptide for an efficient rate of reaction. N-terminal L-methionine is a prerequisite for activity but the enzyme has broad specificity at other positions. In Oceanobacillus iheyensis (strain DSM 14371 / CIP 107618 / JCM 11309 / KCTC 3954 / HTE831), this protein is Peptide deformylase.